Consider the following 274-residue polypeptide: Envelope glycoprotein L (274 aa).

Residues methionine 1 to serine 21 form the signal peptide. The region spanning valine 51–valine 251 is the gL betaherpesvirus-type domain. Cysteine 156 and cysteine 161 form a disulfide bridge.

Belongs to the herpesviridae glycoprotein L (gL) family. Betaherpesvirinae gL subfamily. As to quaternary structure, interacts with glycoprotein H (gH); this interaction is necessary for the correct processing and cell surface expression of gH.

The protein resides in the virion membrane. It localises to the host cell membrane. It is found in the host Golgi apparatus. The protein localises to the host trans-Golgi network. The heterodimer glycoprotein H-glycoprotein L is required for the fusion of viral and plasma membranes leading to virus entry into the host cell. Acts as a functional inhibitor of gH and maintains gH in an inhibited form. Upon binding to host integrins, gL dissociates from gH leading to activation of the viral fusion glycoproteins gB and gH. This chain is Envelope glycoprotein L, found in Mus musculus (Mouse).